The chain runs to 297 residues: tRNA pseudouridine synthase A (297 aa).

The active-site Nucleophile is Asp-57. Tyr-115 is a binding site for substrate.

Belongs to the tRNA pseudouridine synthase TruA family. As to quaternary structure, homodimer.

It catalyses the reaction uridine(38/39/40) in tRNA = pseudouridine(38/39/40) in tRNA. Its function is as follows. Formation of pseudouridine at positions 38, 39 and 40 in the anticodon stem and loop of transfer RNAs. The polypeptide is tRNA pseudouridine synthase A (Nitratidesulfovibrio vulgaris (strain ATCC 29579 / DSM 644 / CCUG 34227 / NCIMB 8303 / VKM B-1760 / Hildenborough) (Desulfovibrio vulgaris)).